The sequence spans 289 residues: Acetylglutamate kinase (289 aa).

Substrate contacts are provided by residues 60–61 (GG), R82, and N182.

The protein belongs to the acetylglutamate kinase family. ArgB subfamily.

The protein localises to the cytoplasm. The catalysed reaction is N-acetyl-L-glutamate + ATP = N-acetyl-L-glutamyl 5-phosphate + ADP. It participates in amino-acid biosynthesis; L-arginine biosynthesis; N(2)-acetyl-L-ornithine from L-glutamate: step 2/4. In terms of biological role, catalyzes the ATP-dependent phosphorylation of N-acetyl-L-glutamate. This chain is Acetylglutamate kinase, found in Methanothrix thermoacetophila (strain DSM 6194 / JCM 14653 / NBRC 101360 / PT) (Methanosaeta thermophila).